The primary structure comprises 325 residues: L-lactate dehydrogenase (325 aa).

NAD(+)-binding positions include V19, D40, K45, Y70, and 84–85 (GA). Residues Q87 and R93 each contribute to the substrate site. Residues T106, 123–125 (AAN), and S148 each bind NAD(+). 125-128 (NPVD) is a binding site for substrate. 153 to 156 (DSAR) serves as a coordination point for substrate. The beta-D-fructose 1,6-bisphosphate site is built by R158 and H173. The active-site Proton acceptor is H180. Y225 bears the Phosphotyrosine mark. A substrate-binding site is contributed by T234.

It belongs to the LDH/MDH superfamily. LDH family. In terms of assembly, homotetramer.

The protein localises to the cytoplasm. It catalyses the reaction (S)-lactate + NAD(+) = pyruvate + NADH + H(+). It functions in the pathway fermentation; pyruvate fermentation to lactate; (S)-lactate from pyruvate: step 1/1. Allosterically activated by fructose 1,6-bisphosphate (FBP). Catalyzes the conversion of lactate to pyruvate. The polypeptide is L-lactate dehydrogenase (Latilactobacillus sakei (Lactobacillus sakei)).